A 436-amino-acid polypeptide reads, in one-letter code: Diaminobutyrate--2-oxoglutarate transaminase (436 aa).

Residue lysine 269 is modified to N6-(pyridoxal phosphate)lysine.

Belongs to the class-III pyridoxal-phosphate-dependent aminotransferase family. Requires pyridoxal 5'-phosphate as cofactor.

The enzyme catalyses L-2,4-diaminobutanoate + 2-oxoglutarate = L-aspartate 4-semialdehyde + L-glutamate. Its pathway is amine and polyamine biosynthesis; ectoine biosynthesis; L-ectoine from L-aspartate 4-semialdehyde: step 1/3. Catalyzes reversively the conversion of L-aspartate beta-semialdehyde (ASA) to L-2,4-diaminobutyrate (DABA) by transamination with L-glutamate. The protein is Diaminobutyrate--2-oxoglutarate transaminase (ectB) of Nocardia farcinica (strain IFM 10152).